The primary structure comprises 319 residues: Serpentine receptor class X-43 (319 aa).

7 consecutive transmembrane segments (helical) span residues 28 to 48, 67 to 87, 95 to 115, 138 to 158, 164 to 184, 194 to 214, and 267 to 287; these read VVSM…IGCF, AQLM…LLNI, YLFG…FLLM, IRTF…YLVV, FVFY…CGTL, TVLS…LMAF, and FFFT…VVVF.

Belongs to the G-protein coupled receptor 1 family. As to expression, expressed in ASI sensory neurons.

The protein resides in the cell membrane. It localises to the perikaryon. The protein localises to the cell projection. It is found in the cilium. Functionally, receptor for the ascaroside pheromone icas#9 which suppresses exploratory forgaging behavior. In response to ascaroside icas#9, may furthermore play a role in the expression of genes in the TGF-beta signaling pathway, such as daf-7, and in insulin signaling pathway, such as daf-28, which may in turn contribute to exploratory behavior. This Caenorhabditis elegans protein is Serpentine receptor class X-43.